The primary structure comprises 639 residues: CTTNBP2 N-terminal-like protein (639 aa).

Positions 87–285 (MKQCKNMQER…DLEASHQHSS (199 aa)) form a coiled coil. Phosphoserine is present on residues serine 284 and serine 285. Disordered regions lie at residues 387-430 (VENG…PCSS), 463-490 (RHKF…LSPT), and 511-609 (RFTS…AASL). Low complexity-rich tracts occupy residues 405–430 (PLSS…PCSS) and 467–477 (QSQADQDQQAS). A phosphoserine mark is found at serine 481, serine 488, serine 523, serine 527, serine 560, serine 563, and serine 568. Positions 511–529 (RFTSQQGPIKPVSPNSSPF) are enriched in polar residues. Residues threonine 570 and threonine 590 each carry the phosphothreonine modification. Positions 587-600 (PGLTPSPSATTPLT) are enriched in low complexity. A Phosphoserine modification is found at serine 592.

As to quaternary structure, interacts with CTTN/cortactin; this interaction may redistribute CTTN to stress fibers. May form homomers. Associates with the core of STRIPAK complexes composed of PP2A catalytic and scaffolding subunits, the striatins (PP2A regulatory subunits), the striatin-associated proteins MOB4, STRIP1 and STRIP2, PDCD10 and members of the STE20 kinases, such as STK24 and STK26.

Its subcellular location is the cell projection. The protein localises to the lamellipodium. It localises to the cytoplasm. The protein resides in the cytoskeleton. It is found in the stress fiber. In terms of biological role, regulates lamellipodial actin dynamics in a CTTN-dependent manner. Associates with core striatin-interacting phosphatase and kinase (STRIPAK) complex to form CTTNBP2NL-STRIPAK complexes. STRIPAK complexes have critical roles in protein (de)phosphorylation and are regulators of multiple signaling pathways including Hippo, MAPK, nuclear receptor and cytoskeleton remodeling. Different types of STRIPAK complexes are involved in a variety of biological processes such as cell growth, differentiation, apoptosis, metabolism and immune regulation. This chain is CTTNBP2 N-terminal-like protein, found in Homo sapiens (Human).